The chain runs to 344 residues: MSETQNHNSYGKPVEMTVIGAGSYGTSLAISLARNGANIVLWGHDAEHMARLDADRANHEFLPGIAFPDTLIVETDLQKAVQASRDLLVVVPSHVFGIVLKSLQPHLRADSRICWATKGLEPETGRLLQDVAHDVLGDSYPLAVLSGPTFAKELAMGMPTAISVASPDAQFVRDLQEKIHCSKTFRVYANSDFIGMQLGGAVKNVIAIGAGMSDGIGFGANARTALITRGLAEMSRLGAALGAQPETFMGMAGLGDLVLTCTDNQSRNRRFGLALGQGKDVDTAQTDIGQVVEGYRNTKEVWMLAKRMGVEMPIVEQIYQVLYQGKDARLAAQDLLARDKKMER.

Residues S23, Y24, H44, and K118 each contribute to the NADPH site. Sn-glycerol 3-phosphate-binding residues include K118, G147, and T149. Position 151 (A151) interacts with NADPH. The sn-glycerol 3-phosphate site is built by K203, D256, S266, R267, and N268. K203 functions as the Proton acceptor in the catalytic mechanism. Residue R267 coordinates NADPH. NADPH contacts are provided by V291 and E293.

The protein belongs to the NAD-dependent glycerol-3-phosphate dehydrogenase family.

The protein resides in the cytoplasm. It catalyses the reaction sn-glycerol 3-phosphate + NAD(+) = dihydroxyacetone phosphate + NADH + H(+). The enzyme catalyses sn-glycerol 3-phosphate + NADP(+) = dihydroxyacetone phosphate + NADPH + H(+). It participates in membrane lipid metabolism; glycerophospholipid metabolism. Catalyzes the reduction of the glycolytic intermediate dihydroxyacetone phosphate (DHAP) to sn-glycerol 3-phosphate (G3P), the key precursor for phospholipid synthesis. The polypeptide is Glycerol-3-phosphate dehydrogenase [NAD(P)+] (Vibrio cholerae serotype O1 (strain ATCC 39541 / Classical Ogawa 395 / O395)).